A 611-amino-acid chain; its full sequence is Chaperone protein HscA (611 aa).

Belongs to the heat shock protein 70 family.

Its function is as follows. Chaperone involved in the maturation of iron-sulfur cluster-containing proteins. Has a low intrinsic ATPase activity which is markedly stimulated by HscB. Involved in the maturation of IscU. In Buchnera aphidicola subsp. Acyrthosiphon pisum (strain 5A), this protein is Chaperone protein HscA.